A 242-amino-acid chain; its full sequence is Copper transport protein B (242 aa).

2 consecutive transmembrane segments (helical) span residues 8-28 (ICLC…ACVL) and 86-106 (ITGP…TAGY). Residues 153 to 175 (ESATTNVPSSQTPNESSPLVAGR) are disordered. Positions 154–169 (SATTNVPSSQTPNESS) are enriched in polar residues. 2 helical membrane passes run 187 to 207 (IILA…MLLF) and 210 to 230 (YNGF…LVFG).

Belongs to the copper transporter (Ctr) (TC 1.A.56) family. SLC31A subfamily.

It is found in the membrane. Functionally, transporter that is probably involved in the transport of copper, even if it does not act as a major copper transporter. In Aspergillus fumigatus (strain ATCC MYA-4609 / CBS 101355 / FGSC A1100 / Af293) (Neosartorya fumigata), this protein is Copper transport protein B.